We begin with the raw amino-acid sequence, 98 residues long: Serine protease inhibitor Kazal-type 14 (98 aa).

Residues 1–23 form the signal peptide; it reads MVKYFQVLWSLLFSIMLHSMLLA. One can recognise a Kazal-like domain in the interval 35 to 98; sequence GLIKIKCPYK…QIRYYHTGRC (64 aa). 3 disulfide bridges follow: C41–C80, C58–C77, and C66–C98. N52 is a glycosylation site (N-linked (GlcNAc...) asparagine).

The protein localises to the secreted. Its function is as follows. May be a serine protease inhibitor. The chain is Serine protease inhibitor Kazal-type 14 (Spink14) from Rattus norvegicus (Rat).